Consider the following 445-residue polypeptide: Chromosome partition protein MukF (445 aa).

The leucine-zipper stretch occupies residues 213 to 241; the sequence is LSETSNTLKELQDTLQAAGDELQTQILDI.

It belongs to the MukF family. In terms of assembly, interacts, and probably forms a ternary complex, with MukE and MukB via its C-terminal region. The complex formation is stimulated by calcium or magnesium. It is required for an interaction between MukE and MukB.

The protein localises to the cytoplasm. It localises to the nucleoid. Its function is as follows. Involved in chromosome condensation, segregation and cell cycle progression. May participate in facilitating chromosome segregation by condensation DNA from both sides of a centrally located replisome during cell division. Not required for mini-F plasmid partitioning. Probably acts via its interaction with MukB and MukE. Overexpression results in anucleate cells. It has a calcium binding activity. This is Chromosome partition protein MukF from Vibrio vulnificus (strain CMCP6).